The chain runs to 365 residues: Histidinol-phosphate aminotransferase (365 aa).

An N6-(pyridoxal phosphate)lysine modification is found at Lys-222.

This sequence belongs to the class-II pyridoxal-phosphate-dependent aminotransferase family. Histidinol-phosphate aminotransferase subfamily. Homodimer. It depends on pyridoxal 5'-phosphate as a cofactor.

The enzyme catalyses L-histidinol phosphate + 2-oxoglutarate = 3-(imidazol-4-yl)-2-oxopropyl phosphate + L-glutamate. It participates in amino-acid biosynthesis; L-histidine biosynthesis; L-histidine from 5-phospho-alpha-D-ribose 1-diphosphate: step 7/9. In Geobacillus sp. (strain WCH70), this protein is Histidinol-phosphate aminotransferase.